Consider the following 296-residue polypeptide: Arginine/serine-rich protein 1 (296 aa).

The tract at residues 1–131 is disordered; sequence MSNYVNDMWP…RSRSRSRERS (131 aa). Serine 12 bears the Phosphoserine mark. The segment covering 20–31 has biased composition (low complexity); it reads SASRSGGSSRLS. A compositionally biased stretch (basic residues) spans 32-125; it reads SRSRSRSFSR…RSRSRSRSRS (94 aa). Residues serine 111 and serine 113 each carry the phosphoserine modification. Arginine 141 is subject to Omega-N-methylarginine. Residues 156–165 show a composition bias toward basic and acidic residues; it reads ERSRWRDRSR. 2 disordered regions span residues 156-175 and 217-296; these read ERSR…TPFR and SHGI…WIPV. A compositionally biased stretch (polar residues) spans 245 to 261; sequence EKPSQQRSIAFSSNNSV. Residues 272-287 show a composition bias toward basic and acidic residues; the sequence is ATEETSSRSPKIDKKK. Position 280 is a phosphoserine (serine 280).

It belongs to the RSRP family. In terms of processing, phosphorylated. Phosphorylation at Ser-111 and Ser-113 mediates the interaction with spliceosome proteins.

The protein resides in the nucleus. In terms of biological role, probably acts as a spliceosomal factor that contributes to spliceosome assembly and regulates the isoform switching of proteins such as PARP6. This Macaca fascicularis (Crab-eating macaque) protein is Arginine/serine-rich protein 1 (RSRP1).